We begin with the raw amino-acid sequence, 341 residues long: uncharacterized protein (341 aa).

Residues 153–179 (AYTLSEKVMNAEREAEETRETIIREAH) are a coiled coil. The segment covering 319 to 335 (EQLQNPAPESAPSTSKT) has biased composition (polar residues). The tract at residues 319 to 341 (EQLQNPAPESAPSTSKTLRSKNP) is disordered.

This is an uncharacterized protein from Coxiella burnetii (strain RSA 493 / Nine Mile phase I).